A 315-amino-acid chain; its full sequence is Ninja-family protein 1 (315 aa).

Disordered stretches follow at residues 1 to 28 (MASR…AGEA), 68 to 142 (SLPG…AQEP), and 156 to 237 (DQGN…TGDL). The span at 99-108 (ERWRRREMQS) shows a compositional bias: basic and acidic residues. A compositionally biased stretch (polar residues) spans 156–166 (DQGNPSSSMPE). Composition is skewed to low complexity over residues 184–197 (SSDN…QNKS) and 221–234 (LRTL…TTST).

It belongs to the Ninja family.

The protein localises to the nucleus. The chain is Ninja-family protein 1 (AFP-A1) from Triticum aestivum (Wheat).